Reading from the N-terminus, the 118-residue chain is Large ribosomal subunit protein uL22c (118 aa).

This sequence belongs to the universal ribosomal protein uL22 family. Part of the 50S ribosomal subunit.

The protein localises to the plastid. It is found in the organellar chromatophore. Functionally, this protein binds specifically to 23S rRNA. Its function is as follows. The globular domain of the protein is located near the polypeptide exit tunnel on the outside of the subunit, while an extended beta-hairpin is found that lines the wall of the exit tunnel in the center of the 70S ribosome. In Paulinella chromatophora, this protein is Large ribosomal subunit protein uL22c (rpl22).